The chain runs to 177 residues: Alkyl hydroperoxide reductase AhpD (177 aa).

The active-site Proton donor is Cys-130. A disulfide bond links Cys-130 and Cys-133. Cys-133 acts as the Cysteine sulfenic acid (-SOH) intermediate in catalysis.

The protein belongs to the AhpD family. Homotrimer.

It catalyses the reaction N(6)-[(R)-dihydrolipoyl]-L-lysyl-[lipoyl-carrier protein] + a hydroperoxide = N(6)-[(R)-lipoyl]-L-lysyl-[lipoyl-carrier protein] + an alcohol + H2O. In terms of biological role, antioxidant protein with alkyl hydroperoxidase activity. Required for the reduction of the AhpC active site cysteine residues and for the regeneration of the AhpC enzyme activity. This Corynebacterium aurimucosum (strain ATCC 700975 / DSM 44827 / CIP 107346 / CN-1) (Corynebacterium nigricans) protein is Alkyl hydroperoxide reductase AhpD.